Here is a 208-residue protein sequence, read N- to C-terminus: Sexual inducer glycoprotein (208 aa).

The signal sequence occupies residues 1 to 11 (MAVVVVNSATA). Asparagine 89, asparagine 119, asparagine 131, asparagine 139, asparagine 146, and asparagine 188 each carry an N-linked (GlcNAc...) asparagine glycan.

In terms of biological role, the sexual inducer is a glycoprotein synthesized and released by sexual males at about the time they release sperm packets. It is one of the most potent biological effector molecules known: it exhibits full effectiveness in converting asexually growing males and females to the sexual pathway at about 10(-7) m. This Volvox carteri (Green alga) protein is Sexual inducer glycoprotein.